A 298-amino-acid polypeptide reads, in one-letter code: Small ribosomal subunit protein uS3 (298 aa).

Positions 39-107 (VREYLKAKLK…PVAVNIEEVR (69 aa)) constitute a KH type-2 domain. The disordered stretch occupies residues 214–298 (PAAVEARTDE…PAAAADGKGE (85 aa)). A compositionally biased stretch (basic and acidic residues) spans 219–245 (ARTDEERRPRGPRRDDRGARPGADRPA). A compositionally biased stretch (low complexity) spans 277–298 (KPAVQRVRKVAAPAAAADGKGE).

The protein belongs to the universal ribosomal protein uS3 family. Part of the 30S ribosomal subunit. Forms a tight complex with proteins S10 and S14.

In terms of biological role, binds the lower part of the 30S subunit head. Binds mRNA in the 70S ribosome, positioning it for translation. The protein is Small ribosomal subunit protein uS3 of Albidiferax ferrireducens (strain ATCC BAA-621 / DSM 15236 / T118) (Rhodoferax ferrireducens).